We begin with the raw amino-acid sequence, 526 residues long: Zinc finger protein Helios (526 aa).

Residues 28-94 form a disordered region; sequence DLTSSTPNGQ…IESSEVADNR (67 aa). Residues 29-50 show a composition bias toward polar residues; it reads LTSSTPNGQHASPSHMTSTNSV. Serine 56 carries the post-translational modification Phosphoserine. The segment covering 61–77 has biased composition (basic and acidic residues); the sequence is DRQPLSREDEIRGHDEG. 2 positions are modified to phosphoserine: serine 78 and serine 79. A Glycyl lysine isopeptide (Lys-Gly) (interchain with G-Cter in SUMO2) cross-link involves residue lysine 95. C2H2-type zinc fingers lie at residues 112–134, 140–162, 168–190, and 196–219; these read LKCD…KRSH, FHCN…IKLH, FKCP…LRTH, and HKCN…ERCH. Lysine 288 bears the N6-acetyllysine mark. Residues 368–379 are compositionally biased toward basic and acidic residues; it reads ISRETSDSHENN. The tract at residues 368–435 is disordered; it reads ISRETSDSHE…LNPKRKQSPA (68 aa). Residues lysine 442 and lysine 448 each participate in a glycyl lysine isopeptide (Lys-Gly) (interchain with G-Cter in SUMO2) cross-link. 2 consecutive C2H2-type zinc fingers follow at residues 471–493 and 499–523; these read FKCE…MGCH and LECN…RGEH.

Belongs to the Ikaros C2H2-type zinc-finger protein family. In terms of assembly, can form homodimers. Interacts with IKZF4 and IKZF5. As to expression, expressed in outer hair cells (OHC) of the organ of Corti. Abundant in thymus, low expression in bone marrow and brain and no detectable expression in spleen, liver, kidney or muscle. Expressed in T-cells.

The protein resides in the nucleus. In terms of biological role, transcriptional regulator required for outer hair cells (OHC) maturation and, consequently, for hearing. This chain is Zinc finger protein Helios (Ikzf2), found in Mus musculus (Mouse).